A 133-amino-acid polypeptide reads, in one-letter code: Salivary cystatin-L (133 aa).

The first 19 residues, 1–19 (MTASFALVLLLGGVAVCIA), serve as a signal peptide directing secretion. Residues 29–115 (KANHQANPEY…VAQRTCTTVV (87 aa)) enclose the Cystatin domain.

It belongs to the cystatin family. In terms of tissue distribution, salivary gland.

It is found in the secreted. In terms of biological role, inhibitor of cysteine proteinases. Inhibits host cathepsin L (CTSL) and S (CTSS). Modulates production of various cytokines and chemokines in lipopolysaccharide (LPS)-stimulated mouse dendritic cell. Suppresses maturation of mouse bone-marrow-derived dendritic cells (BMDCs). In Ixodes persulcatus (Taiga tick), this protein is Salivary cystatin-L.